Reading from the N-terminus, the 198-residue chain is Ribonuclease HII (198 aa).

One can recognise an RNase H type-2 domain in the interval 10–198; that stretch reads QLVAGVDEVG…PVKRALGLAS (189 aa). A divalent metal cation-binding residues include Asp-16, Glu-17, and Asp-108.

The protein belongs to the RNase HII family. Mn(2+) serves as cofactor. The cofactor is Mg(2+).

Its subcellular location is the cytoplasm. The enzyme catalyses Endonucleolytic cleavage to 5'-phosphomonoester.. In terms of biological role, endonuclease that specifically degrades the RNA of RNA-DNA hybrids. This is Ribonuclease HII from Citrobacter koseri (strain ATCC BAA-895 / CDC 4225-83 / SGSC4696).